A 3011-amino-acid polypeptide reads, in one-letter code: Genome polyprotein (3011 aa).

Ser-2 is subject to N-acetylserine; by host. The tract at residues 2–23 is interaction with STAT1; it reads STIPKPQRKTKRNTNRRPQDVK. An interaction with EIF2AK2/PKR region spans residues 2 to 58; it reads STIPKPQRKTKRNTNRRPQDVKFPGGGQIVGGVYLLPRRGPRLGVRATRKTSERSQP. Residues 2-59 form an interaction with DDX3X region; that stretch reads STIPKPQRKTKRNTNRRPQDVKFPGGGQIVGGVYLLPRRGPRLGVRATRKTSERSQPR. Residues 2 to 75 form a disordered region; that stretch reads STIPKPQRKT…PKVRRPEGRT (74 aa). At 2-168 the chain is on the cytoplasmic side; sequence STIPKPQRKT…EDGVNYATGN (167 aa). 2 consecutive short sequence motifs (nuclear localization signal) follow at residues 5-13 and 38-43; these read PKPQRKTKR and PRRGPR. A compositionally biased stretch (basic residues) spans 7–16; the sequence is PQRKTKRNTN. A compositionally biased stretch (low complexity) spans 32–47; sequence GGVYLLPRRGPRLGVR. Ser-53 is subject to Phosphoserine; by host. 2 short sequence motifs (nuclear localization signal) span residues 58-64 and 66-71; these read PRGRRQP and PKVRRP. A compositionally biased stretch (basic residues) spans 58 to 68; that stretch reads PRGRRQPIPKV. The residue at position 99 (Ser-99) is a Phosphoserine; by host. The interval 112–152 is important for endoplasmic reticulum and mitochondrial localization; that stretch reads PRRRSRNLGKVIDTLTCGFADLMGYIPLVGAPLGGAARALA. Ser-116 bears the Phosphoserine; by host PKA mark. The interaction with APOA2 stretch occupies residues 122–173; the sequence is VIDTLTCGFADLMGYIPLVGAPLGGAARALAHGVRVLEDGVNYATGNLPGCS. The important for lipid droplets localization stretch occupies residues 164-167; the sequence is YATG. The chain crosses the membrane as a helical span at residues 169 to 189; the sequence is LPGCSFSIFLLALLSCLTVPA. Residues 178–191 constitute a propeptide, ER anchor for the core protein, removed in mature form by host signal peptidase; the sequence is LLALLSCLTVPASA. At 190–358 the chain is on the lumenal side; sequence SAYQVRNSTG…AGAHWGVLAG (169 aa). N-linked (GlcNAc...) asparagine; by host glycans are attached at residues Asn-196, Asn-209, and Asn-234. The interval 265-296 is important for fusion; that stretch reads LVGSATLCSALYVGDLCGSVFLIGQLFTFSPR. Asn-305 carries an N-linked (GlcNAc...) asparagine; by host glycan. A helical transmembrane segment spans residues 359 to 379; that stretch reads IAYFSMVGNWAKVLVVLLLFA. The Lumenal segment spans residues 380-725; it reads GVDAETIVSG…WEYVVLLFLL (346 aa). The segment at 385 to 411 is HVR1; it reads TIVSGGQAARAMSGLVSLFTPGAKQNI. Asn-417, Asn-423, Asn-430, and Asn-448 each carry an N-linked (GlcNAc...) (high mannose) asparagine; by host glycan. 4 disulfide bridges follow: Cys-429/Cys-552, Cys-452/Cys-459, Cys-486/Cys-494, and Cys-503/Cys-508. The tract at residues 474-479 is HVR2; the sequence is HANGSG. Residues 480–493 are CD81-binding 1; sequence PDQRPYCWHYPPKP. N-linked (GlcNAc...) (high mannose) asparagine; by host glycosylation is present at Asn-532. Asn-540 is a glycosylation site (N-linked (GlcNAc...) asparagine; by host). Residues 544 to 551 are CD81-binding 2; sequence PPLGNWFG. Residue Asn-556 is glycosylated (N-linked (GlcNAc...) (high mannose) asparagine; by host). Cysteines 564 and 569 form a disulfide. Asn-576 is a glycosylation site (N-linked (GlcNAc...) (high mannose) asparagine; by host). Intrachain disulfides connect Cys-581/Cys-585, Cys-597/Cys-620, and Cys-607/Cys-644. N-linked (GlcNAc...) (high mannose) asparagine; by host glycans are attached at residues Asn-623 and Asn-645. Cys-652 and Cys-677 are joined by a disulfide. The tract at residues 660 to 671 is PKR/eIF2-alpha phosphorylation homology domain (PePHD); the sequence is SELSPLLLSTTQ. Residues 726–746 form a helical membrane-spanning segment; that stretch reads LADARVCSCLWMMLLISQAEA. Residues 747 to 757 are Lumenal-facing; it reads ALENLVILNAA. Residues 758-778 form a helical membrane-spanning segment; that stretch reads SLAGTRGLVSFLVFFCFAWYL. The Cytoplasmic portion of the chain corresponds to 779–781; the sequence is KGR. The helical transmembrane segment at 782–803 threads the bilayer; that stretch reads WVPGAAYALYGMWPLLLLLLAL. The Lumenal segment spans residues 804 to 813; the sequence is PQRAYALDTE. Residues 814–834 form a helical membrane-spanning segment; that stretch reads VAASCGGVVLVGLMALTLSPY. The Cytoplasmic portion of the chain corresponds to 835–838; that stretch reads YKRC. A helical transmembrane segment spans residues 839–859; sequence ISWCLWWLQYFLTRVEAQLHV. Topologically, residues 860–881 are lumenal; sequence WVPPLNVRGGRDAVILLMCVVH. Residues 882 to 902 traverse the membrane as a helical segment; it reads PTLVFDITKLLLAVLGPLWIL. The Peptidase C18 domain occupies 903–1026; the sequence is QASLLKVPYF…GMVSKGWRLL (124 aa). The Cytoplasmic portion of the chain corresponds to 903–1657; the sequence is QASLLKVPYF…CMSADLEVVT (755 aa). The segment at 904–1206 is protease NS2-3; the sequence is ASLLKVPYFV…PVESLETTMR (303 aa). Cys-922 is lipidated: S-palmitoyl cysteine; by host. Residues 929–949 form an interaction with host SCPS1 region; it reads VGGHYVQMAIIKLGALTGTYV. Active-site for protease NS2 activity; shared with dimeric partner residues include His-952, Glu-972, and Cys-993. One can recognise a Peptidase S29 domain in the interval 1027–1208; sequence APITAYAQQT…ESLETTMRSP (182 aa). Residues His-1083 and Asp-1107 each act as charge relay system; for serine protease NS3 activity in the active site. Zn(2+)-binding residues include Cys-1123 and Cys-1125. Ser-1165 (charge relay system; for serine protease NS3 activity) is an active-site residue. Zn(2+) is bound by residues Cys-1171 and His-1175. The Helicase ATP-binding domain occupies 1217–1369; it reads PAVPQSFQVA…ANIEEVALST (153 aa). 1230–1237 contacts ATP; the sequence is APTGSGKS. Mg(2+) is bound by residues Ser-1237 and Glu-1317. The DECH box motif lies at 1316–1319; sequence DECH. The RNA-binding stretch occupies residues 1486–1497; the sequence is QRRGRTGRGKPG. Residues 1658-1678 form a helical membrane-spanning segment; the sequence is STWVLVGGVLAALAAYCLSTG. The NS3-binding stretch occupies residues 1679–1690; sequence CVVIVGRIVLSG. The Cytoplasmic segment spans residues 1679–1805; sequence CVVIVGRIVL…AVTSPLTTSQ (127 aa). A helical membrane pass occupies residues 1806–1824; the sequence is TLLFNILGGWVAAQLAAPG. The Lumenal portion of the chain corresponds to 1825-1828; the sequence is AATA. A helical membrane pass occupies residues 1829–1849; it reads FVGSGLAGAAVGSVGLGRVLV. A topological domain (cytoplasmic) is located at residue Asp-1850. A helical transmembrane segment spans residues 1851 to 1871; that stretch reads ILAGYGAGVAGALVAFKIMSG. Over 1872-1881 the chain is Lumenal; it reads ELPSTEDLVN. Residues 1882–1902 traverse the membrane as a helical segment; sequence LLPAILSPGALVVGVVCAAIL. Over 1903–1972 the chain is Cytoplasmic; that stretch reads RRHVGPGEGA…WLSSESTTPC (70 aa). A lipid anchor (S-palmitoyl cysteine; by host) is attached at Cys-1972. The stretch at 1973–2002 is an intramembrane region; it reads SGSWLRDIWDWICEVLSDFKTWLKTKLMPH. At 2003-2990 the chain is on the cytoplasmic side; that stretch reads LPGIPFVSCQ…YHSVSHARPR (988 aa). Zn(2+)-binding residues include Cys-2011, Cys-2029, Cys-2031, and Cys-2052. Positions 2120 to 2208 are FKBP8-binding; sequence EFFTELDGVR…ASSSASQLSA (89 aa). The interval 2120–2332 is transcriptional activation; it reads EFFTELDGVR…PVPPPRKKRT (213 aa). The interaction with non-structural protein 4A stretch occupies residues 2135 to 2139; the sequence is PPCKP. The segment at 2187–2207 is disordered; sequence GRRLARGSPPSEASSSASQLS. An interaction with host SKP2 region spans residues 2189–2441; sequence RLARGSPPSE…TPCAAEEQKL (253 aa). Phosphoserine; by host; in p56 is present on Ser-2194. 5 positions are modified to phosphoserine; by host; in p58: Ser-2197, Ser-2201, Ser-2204, Ser-2207, and Ser-2210. Residues 2210-2249 are ISDR; that stretch reads SLKATCTINHDSPDAELIEANLLWRQEMGGNITRVESENK. Residues 2210–2275 are interaction with EIF2AK2/PKR; that stretch reads SLKATCTINH…REISVPAEIL (66 aa). The interval 2249–2306 is NS4B-binding; that stretch reads KVVILDSFDPLVAEEDEREISVPAEILRKSRRFTQALPIWARPDYNPPLIETWKKPNY. Residues 2312–2334 form a disordered region; sequence HGCPLPPPQSPPVPPPRKKRTVV. The span at 2315-2326 shows a compositional bias: pro residues; that stretch reads PLPPPQSPPVPP. The SH3-binding signature appears at 2322–2325; sequence PPVP. Positions 2326 to 2334 match the Nuclear localization signal motif; the sequence is PPRKKRTVV. Residue Lys-2350 forms a Glycyl lysine isopeptide (Lys-Gly) (interchain with G-Cter in ubiquitin) linkage. A compositionally biased stretch (low complexity) spans 2351-2369; it reads SFGSSSTSGITGDNTTTSS. The interval 2351-2408 is disordered; the sequence is SFGSSSTSGITGDNTTTSSEPAPSGCSPDSDAESYSSMPPLEGEPGDPDLSDGSWSTV. Positions 2354-2377 are V3; it reads SSSTSGITGDNTTTSSEPAPSGCS. A phosphoserine; by host mark is found at Ser-2449 and Ser-2462. The 119-residue stretch at 2634–2752 folds into the RdRp catalytic domain; it reads PMGFSYDTRC…ICESAGVQED (119 aa). Mg(2+) contacts are provided by Asp-2640, Asp-2738, and Asp-2739. Residues 2991–3011 traverse the membrane as a helical segment; that stretch reads WFWFCLLLLAAGVGIYLLPNR.

It belongs to the hepacivirus polyprotein family. As to quaternary structure, homooligomer. Interacts with E1 (via C-terminus). Interacts with the non-structural protein 5A. Interacts (via N-terminus) with host STAT1 (via SH2 domain); this interaction results in decreased STAT1 phosphorylation and ubiquitin-mediated proteasome-dependent STAT1 degradation, leading to decreased IFN-stimulated gene transcription. Interacts with host STAT3; this interaction constitutively activates STAT3. Interacts with host LTBR receptor. Interacts with host TNFRSF1A receptor and possibly induces apoptosis. Interacts with host HNRPK. Interacts with host YWHAE. Interacts with host UBE3A/E6AP. Interacts with host DDX3X. Interacts with host APOA2. Interacts with host RXRA protein. Interacts with host SP110 isoform 3/Sp110b; this interaction sequesters the transcriptional corepressor SP110 away from the nucleus. Interacts with host CREB3 nuclear transcription protein; this interaction triggers cell transformation. Interacts with host ACY3. Interacts with host C1QR1. Interacts with host RBM24; this interaction, which enhances the interaction of the mature core protein with 5'-UTR, may inhibit viral translation and favor replication. Interacts with host EIF2AK2/PKR; this interaction induces the autophosphorylation of EIF2AK2. Part of the viral assembly initiation complex composed of NS2, E1, E2, NS3, NS4A, NS5A and the mature core protein. Forms a heterodimer with envelope glycoprotein E2. Interacts with mature core protein. Interacts with protease NS2. The heterodimer E1/E2 interacts with host CLDN1; this interaction plays a role in viral entry into host cell. Interacts with host SPSB2 (via C-terminus). Part of the viral assembly initiation complex composed of NS2, E1, E2, NS3, NS4A, NS5A and the mature core protein. Interacts with host NEURL3; this interaction prevents E1 binding to glycoprotein E2. In terms of assembly, forms a heterodimer with envelope glycoprotein E1. Interacts with host CD81 and SCARB1 receptors; these interactions play a role in viral entry into host cell. Interacts with host EIF2AK2/PKR; this interaction inhibits EIF2AK2 and probably allows the virus to evade the innate immune response. Interacts with host CD209/DC-SIGN and CLEC4M/DC-SIGNR. Interact with host SPCS1; this interaction is essential for viral particle assembly. Interacts with protease NS2. The heterodimer E1/E2 interacts with host CLDN1; this interaction plays a role in viral entry into host cell. Part of the viral assembly initiation complex composed of NS2, E1, E2, NS3, NS4A, NS5A and the mature core protein. Interacts with host SLC3A2/4F2hc; the interaction may facilitate viral entry into host cell. Interacts with human PLSCR1. As to quaternary structure, homohexamer. Homoheptamer. Interacts with protease NS2. Homodimer. Interacts with host SPCS1; this interaction is essential for viral particle assembly. Interacts with envelope glycoprotein E1. Interacts with envelope glycoprotein E2. Interacts with viroporin p7. Interacts with serine protease/helicase NS3. Part of the replication complex composed of NS2, NS3, NS4A, NS4B, NS5A and the RNA-directed RNA polymerase embedded in an ER-derived membranous web. Part of the viral assembly initiation complex composed of NS2, E1, E2, NS3, NS4A, NS5A and the mature core protein. In terms of assembly, interacts with protease NS2. Interacts with non-structural protein 4A; this interaction stabilizes the folding of NS3 serine protease. NS3-NS4A interaction is essential for NS3 activation and allows membrane anchorage of the latter. NS3/NS4A complex also prevents phosphorylation of host IRF3, thus preventing the establishment of dsRNA induced antiviral state. Interacts with host MAVS; this interaction leads to the cleavage and inhibition of host MAVS. Interacts with host TICAM1; this interaction leads to the cleavage and inhibition of host TICAM1. Interacts with host TANK-binding kinase/TBK1; this interaction results in the inhibition of the association between TBK1 and IRF3, which leads to the inhibition of IRF3 activation. Interacts with host RBM24. Part of the replication complex composed of NS2, NS3, NS4A, NS4B, NS5A and the RNA-directed RNA polymerase embedded in an ER-derived membranous web. Part of the viral assembly initiation complex composed of NS2, E1, E2, NS3, NS4A, NS5A and the mature core protein. As to quaternary structure, interacts with NS3 serine protease; this interaction stabilizes the folding of NS3 serine protease. NS3-NS4A interaction is essential for NS3 activation and allows membrane anchorage of the latter. Interacts with non-structural protein 5A (via N-terminus). Part of the replication complex composed of NS2, NS3, NS4A, NS4B, NS5A and the RNA-directed RNA polymerase embedded in an ER-derived membranous web. Part of the viral assembly initiation complex composed of NS2, E1, E2, NS3, NS4A, NS5A and the mature core protein. Homomultimer. Interacts with non-structural protein NS5A. Interacts with host PLA2G4C; this interaction likely initiates the recruitment of replication complexes to lipid droplets. Interacts with host STING; this interaction disrupts the interaction between STING and TBK1 thereby suppressing the interferon signaling. Part of the replication complex composed of NS2, NS3, NS4A, NS4B, NS5A and the RNA-directed RNA polymerase embedded in an ER-derived membranous web. In terms of assembly, monomer. Homodimer; dimerization is required for RNA-binding. Interacts with the mature core protein. Interacts (via N-terminus) with non-structural protein 4A. Interacts with non-structural protein 4B. Interacts (via region D2) with RNA-directed RNA polymerase. Part of the viral assembly initiation complex composed of NS2, E1, E2, NS3, NS4A, NS5A and the mature core protein. Part of the replication complex composed of NS2, NS3, NS4A, NS4B, NS5A and the RNA-directed RNA polymerase embedded in an ER-derived membranous web. Interacts with host GRB2. Interacts with host BIN1. Interacts with host PIK3R1. Interacts with host SRCAP. Interacts with host FKBP8. Interacts (via C-terminus) with host VAPB (via MSP domain). Interacts with host EIF2AK2/PKR; this interaction leads to disruption of EIF2AK2 dimerization by NS5A and probably allows the virus to evade the innate immune response. Interacts (via N-terminus) with host PACSIN2 (via N-terminus); this interaction attenuates protein kinase C alpha-mediated phosphorylation of PACSIN2 by disrupting the interaction between PACSIN2 and PRKCA. Interacts (via N-terminus) with host SRC kinase (via SH2 domain). Interacts with most Src-family kinases. Interacts with host IFI27 and SKP2; promotes the ubiquitin-mediated proteasomal degradation of NS5A. Interacts with host GPS2. Interacts with host TNFRSF21; this interaction allows the modulation by the virus of JNK, p38 MAPK, STAT3, and Akt signaling pathways in a DR6-dependent manner. Interacts (via N-terminus) with host CIDEB (via N-terminus); this interaction seems to regulate the association of HCV particles with APOE. Interacts with host CHKA/Choline Kinase-alpha; CHKA bridges host PI4KA and NS5A and potentiates NS5A-stimulated PI4KA activity, which then facilitates the targeting of the ternary complex to the ER for viral replication. Interacts with host SPSB2 (via C-terminus); this interaction targets NS5A for ubiquitination and degradation. Interacts with host RAB18; this interaction may promote the association of NS5A and other replicase components with lipid droplets. Interacts (via region D2) with host PPIA/CYPA; the interaction stimulates RNA-binding ability of NS5A and is dependent on the peptidyl-prolyl cis-trans isomerase activity of PPIA/CYPA. Interacts with host TRIM14; this interaction induces the degradation of NS5A. As to quaternary structure, homooligomer. Interacts with non-structural protein 5A. Interacts with host VAPB. Interacts with host PRK2/PKN2. Interacts with host HNRNPA1 and SEPT6; these interactions facilitate viral replication. Part of the replication complex composed of NS2, NS3, NS4A, NS4B, NS5A and the RNA-directed RNA polymerase. Requires Zn(2+) as cofactor. The cofactor is Mg(2+). Post-translationally, specific enzymatic cleavages in vivo yield mature proteins. The structural proteins, core, E1, E2 and p7 are produced by proteolytic processing by host signal peptidases. The core protein precursor is synthesized as a 23 kDa, which is retained in the ER membrane through the hydrophobic signal peptide. Cleavage by the signal peptidase releases the 21 kDa mature core protein. The cleavage of the core protein precursor occurs between aminoacids 176 and 188 but the exact cleavage site is not known. Some degraded forms of the core protein appear as well during the course of infection. The other proteins (p7, NS2, NS3, NS4A, NS4B, NS5A and NS5B) are cleaved by the viral proteases. Autoprocessing between NS2 and NS3 is mediated by the NS2 cysteine protease catalytic domain and regulated by the NS3 N-terminal domain. Phosphorylated by host PKC and PKA. In terms of processing, ubiquitinated; mediated by UBE3A and leading to core protein subsequent proteasomal degradation. Post-translationally, highly N-glycosylated. Palmitoylation is required for NS2/3 autoprocessing and E2 recruitment to membranes. In terms of processing, palmitoylated. This modification may play a role in its polymerization or in protein-protein interactions. Post-translationally, phosphorylated on serines in a basal form termed p56. p58 is a hyperphosphorylated form of p56. p56 and p58 coexist in the cell in roughly equivalent amounts. Hyperphosphorylation is dependent on the presence of NS4A. Host CSNK1A1/CKI-alpha or RPS6KB1 kinases may be responsible for NS5A phosphorylation. Tyrosine phosphorylation is essential for the interaction with host SRC. In terms of processing, the N-terminus is phosphorylated by host PRK2/PKN2.

The protein localises to the host endoplasmic reticulum membrane. The protein resides in the host mitochondrion membrane. It localises to the virion. It is found in the host cytoplasm. Its subcellular location is the host nucleus. The protein localises to the host lipid droplet. The protein resides in the virion membrane. It localises to the host mitochondrion. It is found in the host cell membrane. Its subcellular location is the host perinuclear region. It catalyses the reaction Hydrolysis of four peptide bonds in the viral precursor polyprotein, commonly with Asp or Glu in the P6 position, Cys or Thr in P1 and Ser or Ala in P1'.. The catalysed reaction is a ribonucleoside 5'-triphosphate + H2O = a ribonucleoside 5'-diphosphate + phosphate + H(+). The enzyme catalyses ATP + H2O = ADP + phosphate + H(+). It carries out the reaction RNA(n) + a ribonucleoside 5'-triphosphate = RNA(n+1) + diphosphate. With respect to regulation, inhibited by the antiviral drug hexamethylene amiloride. Inhibition by amantadine appears to be genotype-dependent. Also inhibited by long-alkyl-chain iminosugar derivatives. Its activity is regulated as follows. Activity is up-regulated by PRK2/PKN2-mediated phosphorylation. Functionally, packages viral RNA to form a viral nucleocapsid, and promotes virion budding. Participates in the viral particle production as a result of its interaction with the non-structural protein 5A. Binds RNA and may function as a RNA chaperone to induce the RNA structural rearrangements taking place during virus replication. Modulates viral translation initiation by interacting with viral IRES and 40S ribosomal subunit. Affects various cell signaling pathways, host immunity and lipid metabolism. Prevents the establishment of cellular antiviral state by blocking the interferon-alpha/beta (IFN-alpha/beta) and IFN-gamma signaling pathways and by blocking the formation of phosphorylated STAT1 and promoting ubiquitin-mediated proteasome-dependent degradation of STAT1. Activates STAT3 leading to cellular transformation. Regulates the activity of cellular genes, including c-myc and c-fos. May repress the promoter of p53, and sequester CREB3 and SP110 isoform 3/Sp110b in the cytoplasm. Represses cell cycle negative regulating factor CDKN1A, thereby interrupting an important check point of normal cell cycle regulation. Targets transcription factors involved in the regulation of inflammatory responses and in the immune response: suppresses TNF-induced NF-kappa-B activation, and activates AP-1. Binds to dendritic cells (DCs) via C1QR1, resulting in down-regulation of T-lymphocytes proliferation. Alters lipid metabolism by interacting with hepatocellular proteins involved in lipid accumulation and storage. Induces up-regulation of FAS promoter activity, and thereby contributes to the increased triglyceride accumulation in hepatocytes (steatosis). Its function is as follows. Forms a heterodimer with envelope glycoprotein E2, which mediates virus attachment to the host cell, virion internalization through clathrin-dependent endocytosis and fusion with host membrane. Fusion with the host cell is most likely mediated by both E1 and E2, through conformational rearrangements of the heterodimer required for fusion rather than a classical class II fusion mechanism. E1/E2 heterodimer binds host apolipoproteins such as APOB and ApoE thereby forming a lipo-viro-particle (LVP). APOE associated to the LVP allows the initial virus attachment to cell surface receptors such as the heparan sulfate proteoglycans (HSPGs), syndecan-1 (SDC1), syndecan-1 (SDC2), the low-density lipoprotein receptor (LDLR) and scavenger receptor class B type I (SCARB1). The cholesterol transfer activity of SCARB1 allows E2 exposure and binding of E2 to SCARB1 and the tetraspanin CD81. E1/E2 heterodimer binding on CD81 activates the epithelial growth factor receptor (EGFR) signaling pathway. Diffusion of the complex E1-E2-EGFR-SCARB1-CD81 to the cell lateral membrane allows further interaction with Claudin 1 (CLDN1) and occludin (OCLN) to finally trigger HCV entry. Forms a heterodimer with envelope glycoprotein E1, which mediates virus attachment to the host cell, virion internalization through clathrin-dependent endocytosis and fusion with host membrane. Fusion with the host cell is most likely mediated by both E1 and E2, through conformational rearrangements of the heterodimer required for fusion rather than a classical class II fusion mechanism. The interaction between envelope glycoprotein E2 and host apolipoprotein E/APOE allows the proper assembly, maturation and infectivity of the viral particles. This interaction is probably promoted via the up-regulation of cellular autophagy by the virus. E1/E2 heterodimer binds host apolipoproteins such as APOB and APOE thereby forming a lipo-viro-particle (LVP). APOE associated to the LVP allows the initial virus attachment to cell surface receptors such as the heparan sulfate proteoglycans (HSPGs), syndecan-1 (SDC1), syndecan-1 (SDC2), the low-density lipoprotein receptor (LDLR) and scavenger receptor class B type I (SCARB1). The cholesterol transfer activity of SCARB1 allows E2 exposure and binding of E2 to SCARB1 and the tetraspanin CD81. E1/E2 heterodimer binding on CD81 activates the epithelial growth factor receptor (EGFR) signaling pathway. Diffusion of the complex E1-E2-EGFR-SCARB1-CD81 to the cell lateral membrane allows further interaction with Claudin 1 (CLDN1) and occludin (OCLN) to finally trigger HCV entry. Inhibits host EIF2AK2/PKR activation, preventing the establishment of an antiviral state. Viral ligand for CD209/DC-SIGN and CLEC4M/DC-SIGNR, which are respectively found on dendritic cells (DCs), and on liver sinusoidal endothelial cells and macrophage-like cells of lymph node sinuses. These interactions allow the capture of circulating HCV particles by these cells and subsequent facilitated transmission to permissive cells such as hepatocytes and lymphocyte subpopulations. The interaction between E2 and host amino acid transporter complex formed by SLC3A2 and SLC7A5/LAT1 may facilitate viral entry into host cell. In terms of biological role, ion channel protein that acts as a viroporin and plays an essential role in the assembly, envelopment and secretion of viral particles. Regulates the host cell secretory pathway, which induces the intracellular retention of viral glycoproteins and favors assembly of viral particles. Creates a pore in acidic organelles and releases Ca(2+) and H(+) in the cytoplasm of infected cells, leading to a productive viral infection. High levels of cytoplasmic Ca(2+) may trigger membrane trafficking and transport of viral ER-associated proteins to viroplasms, sites of viral genome replication. This ionic imbalance induces the assembly of the inflammasome complex, which triggers the maturation of pro-IL-1beta into IL-1beta through the action of caspase-1. Targets also host mitochondria and induces mitochondrial depolarization. In addition of its role as a viroporin, acts as a lipid raft adhesion factor. Functionally, cysteine protease required for the proteolytic auto-cleavage between the non-structural proteins NS2 and NS3. The N-terminus of NS3 is required for the function of NS2 protease (active region NS2-3). Promotes the initiation of viral particle assembly by mediating the interaction between structural and non-structural proteins. Its function is as follows. Displays three enzymatic activities: serine protease with a chymotrypsin-like fold, NTPase and RNA helicase. NS3 serine protease, in association with NS4A, is responsible for the cleavages of NS3-NS4A, NS4A-NS4B, NS4B-NS5A and NS5A-NS5B. The NS3/NS4A complex prevents phosphorylation of host IRF3, thus preventing the establishment of dsRNA induced antiviral state. The NS3/NS4A complex induces host amino acid transporter component SLC3A2, thus contributing to HCV propagation. NS3 RNA helicase binds to RNA and unwinds both dsDNA and dsRNA in the 3' to 5' direction, and likely resolves RNA complicated stable secondary structures in the template strand. Binds a single ATP and catalyzes the unzipping of a single base pair of dsRNA. Inhibits host antiviral proteins TBK1 and IRF3 thereby preventing the establishment of an antiviral state. Cleaves host MAVS/CARDIF thereby preventing the establishment of an antiviral state. Cleaves host TICAM1/TRIF, thereby disrupting TLR3 signaling and preventing the establishment of an antiviral state. Induces a specific membrane alteration that serves as a scaffold for the virus replication complex. This membrane alteration gives rise to the so-called ER-derived membranous web that contains the replication complex. NS4B self-interaction contributes to its function in membranous web formation. Promotes host TRIF protein degradation in a CASP8-dependent manner thereby inhibiting host TLR3-mediated interferon signaling. Disrupts the interaction between STING and TBK1 contributing to the inhibition of interferon signaling. In terms of biological role, phosphorylated protein that is indispensable for viral replication and assembly. Both hypo- and hyperphosphorylated states are required for the viral life cycle. The hyperphosphorylated form of NS5A is an inhibitor of viral replication. Involved in RNA-binding and especially in binding to the viral genome. Zinc is essential for RNA-binding. Participates in the viral particle production as a result of its interaction with the mature viral core protein. Its interaction with host VAPB may target the viral replication complex to vesicles. Down-regulates viral IRES translation initiation. Mediates interferon resistance, presumably by interacting with and inhibiting host EIF2AK2/PKR. Prevents BIN1-induced apoptosis. Acts as a transcriptional activator of some host genes important for viral replication when localized in the nucleus. Via the interaction with host PACSIN2, modulates lipid droplet formation in order to promote virion assembly. Modulates TNFRSF21/DR6 signaling pathway for viral propagation. Functionally, RNA-dependent RNA polymerase that performs primer-template recognition and RNA synthesis during viral replication. Initiates RNA transcription/replication at a flavin adenine dinucleotide (FAD), resulting in a 5'- FAD cap on viral RNAs. In this way, recognition of viral 5' RNA by host pattern recognition receptors can be bypassed, thereby evading activation of antiviral pathways. The sequence is that of Genome polyprotein from Hepatitis C virus genotype 1b (isolate HC-J1) (HCV).